The primary structure comprises 123 residues: Alpha-ketoglutarate dehydrogenase subunit 4, mitochondrial (123 aa).

The transit peptide at 1 to 8 directs the protein to the mitochondrion; the sequence is MIATPIRL.

It belongs to the alpha-ketoglutarate dehydrogenase component 4 family. As to quaternary structure, component of the 2-oxoglutarate dehydrogenase complex (OGDC), also called alpha-ketoglutarate dehydrogenase (KGDH) complex. The copmplex is composed of the catalytic subunits OGDH (2-oxoglutarate dehydrogenase KGD1; also called E1 subunit), DLST (dihydrolipoamide succinyltransferase KGD2; also called E2 subunit) and DLD (dihydrolipoamide dehydrogenase LPD1; also called E3 subunit), and the assembly factor KGD4. Within OGDC, interacts (via N-terminus) with E3 subunit and (via C-terminus) with the complex core formed by E1 and E2 subunits.

It localises to the mitochondrion. Functionally, molecular adapter that is necessary to a form a stable 2-oxoglutarate dehydrogenase enzyme complex (OGDC). Required for incorporation of the E3 subunit (LPD1) into the E1-E2 core (KGD1-KGD2) of mitochondrial OGDC, and acting as a stability factor for the fully assembled complex. The chain is Alpha-ketoglutarate dehydrogenase subunit 4, mitochondrial from Saccharomyces cerevisiae (strain ATCC 204508 / S288c) (Baker's yeast).